Reading from the N-terminus, the 482-residue chain is tRNA sulfurtransferase (482 aa).

The 105-residue stretch at 61–165 folds into the THUMP domain; that stretch reads LAIRDALTRI…DDRLLLIKGR (105 aa). ATP is bound by residues 183-184, K265, G287, and Q296; that span reads LI. An intrachain disulfide couples C344 to C456. Residues 404–482 form the Rhodanese domain; that stretch reads FGPNDVILDI…GFNNVKVYRP (79 aa). The active-site Cysteine persulfide intermediate is the C456.

It belongs to the ThiI family.

The protein resides in the cytoplasm. The enzyme catalyses [ThiI sulfur-carrier protein]-S-sulfanyl-L-cysteine + a uridine in tRNA + 2 reduced [2Fe-2S]-[ferredoxin] + ATP + H(+) = [ThiI sulfur-carrier protein]-L-cysteine + a 4-thiouridine in tRNA + 2 oxidized [2Fe-2S]-[ferredoxin] + AMP + diphosphate. It catalyses the reaction [ThiS sulfur-carrier protein]-C-terminal Gly-Gly-AMP + S-sulfanyl-L-cysteinyl-[cysteine desulfurase] + AH2 = [ThiS sulfur-carrier protein]-C-terminal-Gly-aminoethanethioate + L-cysteinyl-[cysteine desulfurase] + A + AMP + 2 H(+). The protein operates within cofactor biosynthesis; thiamine diphosphate biosynthesis. Functionally, catalyzes the ATP-dependent transfer of a sulfur to tRNA to produce 4-thiouridine in position 8 of tRNAs, which functions as a near-UV photosensor. Also catalyzes the transfer of sulfur to the sulfur carrier protein ThiS, forming ThiS-thiocarboxylate. This is a step in the synthesis of thiazole, in the thiamine biosynthesis pathway. The sulfur is donated as persulfide by IscS. The chain is tRNA sulfurtransferase from Escherichia coli (strain K12 / MC4100 / BW2952).